A 104-amino-acid polypeptide reads, in one-letter code: L-rhamnose mutarotase (104 aa).

Tyrosine 18 lines the substrate pocket. The active-site Proton donor is histidine 22. Residues tyrosine 41 and 76 to 77 (WW) each bind substrate.

It belongs to the rhamnose mutarotase family. Homodimer.

The protein resides in the cytoplasm. The catalysed reaction is alpha-L-rhamnose = beta-L-rhamnose. Its pathway is carbohydrate metabolism; L-rhamnose metabolism. Functionally, involved in the anomeric conversion of L-rhamnose. This is L-rhamnose mutarotase from Lachnoclostridium phytofermentans (strain ATCC 700394 / DSM 18823 / ISDg) (Clostridium phytofermentans).